A 308-amino-acid polypeptide reads, in one-letter code: ADP-L-glycero-D-manno-heptose-6-epimerase (308 aa).

Residues 10–11, 31–32, Lys-38, Lys-53, 75–79, and Asn-92 each bind NADP(+); these read FI, DN, and EGACS. The active-site Proton acceptor is Tyr-139. Residue Lys-143 participates in NADP(+) binding. Asn-168 lines the substrate pocket. The NADP(+) site is built by Val-169 and Lys-177. Lys-177 acts as the Proton acceptor in catalysis. Residues Ser-179, His-186, 200 to 203, Arg-208, and Tyr-271 each bind substrate; that span reads FAGS.

It belongs to the NAD(P)-dependent epimerase/dehydratase family. HldD subfamily. Homopentamer. It depends on NADP(+) as a cofactor.

The catalysed reaction is ADP-D-glycero-beta-D-manno-heptose = ADP-L-glycero-beta-D-manno-heptose. The protein operates within nucleotide-sugar biosynthesis; ADP-L-glycero-beta-D-manno-heptose biosynthesis; ADP-L-glycero-beta-D-manno-heptose from D-glycero-beta-D-manno-heptose 7-phosphate: step 4/4. Its pathway is bacterial outer membrane biogenesis; LOS core biosynthesis. Functionally, catalyzes the interconversion between ADP-D-glycero-beta-D-manno-heptose and ADP-L-glycero-beta-D-manno-heptose via an epimerization at carbon 6 of the heptose. The sequence is that of ADP-L-glycero-D-manno-heptose-6-epimerase from Haemophilus influenzae (strain ATCC 51907 / DSM 11121 / KW20 / Rd).